Consider the following 1476-residue polypeptide: Copper-transporting ATPase 1 (1476 aa).

Residues 1 to 642 (MEPSMDVNSV…HKREIKQWRS (642 aa)) are Cytoplasmic-facing. HMA domains are found at residues 8–74 (NSVT…FDAL) and 85–151 (TDTL…LETG). Cu(+) contacts are provided by threonine 18, cysteine 19, and cysteine 22. Threonine 152 is subject to Phosphothreonine. 2 HMA domains span residues 171 to 237 (VVLK…FPAF) and 276 to 342 (STAT…PGQY). Cu(+) is bound by residues cysteine 182, cysteine 185, cysteine 287, and cysteine 290. A Phosphothreonine modification is found at threonine 326. Residues serine 338, serine 352, serine 356, and serine 361 each carry the phosphoserine modification. HMA domains lie at 376–442 (QETV…FDAV), 478–544 (SKCY…FGAT), and 554–620 (GILK…FEAS). Residues cysteine 387, cysteine 390, cysteine 489, cysteine 492, cysteine 565, and cysteine 568 each contribute to the Cu(+) site. Residues 643–665 (SFLVSLFFCTPVMGLMMYMMAME) traverse the membrane as a helical segment. N-linked (GlcNAc...) asparagine glycans are attached at residues asparagine 674 and asparagine 685. A run of 3 helical transmembrane segments spans residues 695–717 (ILPGLSIMNLLSLLLCLPVQFFG), 736–760 (MDVLIVLATTIAFAYSLIILLVAMY), and 770–788 (SFDTPPMLFVFIALGRWLE). A glycan (N-linked (GlcNAc...) asparagine) is linked at asparagine 887. The chain crosses the membrane as a helical span at residues 930–952 (YFVPFIVLVSIATLLVWIIIGFQ). Asparagine 953 carries N-linked (GlcNAc...) asparagine glycosylation. The chain crosses the membrane as a helical span at residues 978–998 (AFQASITVLCIACPCSLGLAT). The active-site 4-aspartylphosphate intermediate is the aspartate 1034. N-linked (GlcNAc...) asparagine glycosylation is found at asparagine 1130 and asparagine 1134. The next 2 membrane-spanning stretches (helical) occupy residues 1347-1373 (INFLFPLIYNLVGIPIAAGVFLPIGLV) and 1379-1397 (GSAAMAASSVSVVLSSLFL). A phosphoserine mark is found at serine 1420 and serine 1422. Asparagine 1448 carries an N-linked (GlcNAc...) asparagine glycan. 7 positions are modified to phosphoserine: serine 1450, serine 1453, serine 1456, serine 1459, serine 1463, serine 1466, and serine 1476.

Belongs to the cation transport ATPase (P-type) (TC 3.A.3) family. As to quaternary structure, monomer. Interacts with PDZD11. Interacts with ATOX1 and COMMD1. Interacts with TYRP1. Directly interacts with SOD3; this interaction is copper-dependent and is required for SOD3 activity. Expressed in most tissues except liver.

The protein resides in the golgi apparatus. It is found in the trans-Golgi network membrane. Its subcellular location is the cell membrane. The enzyme catalyses Cu(+)(in) + ATP + H2O = Cu(+)(out) + ADP + phosphate + H(+). In terms of biological role, may function in the export of copper from the cytoplasm to an intracellular organelle. It may serve as well for the export of other metals. This chain is Copper-transporting ATPase 1 (ATP7A), found in Cricetulus griseus (Chinese hamster).